Here is a 274-residue protein sequence, read N- to C-terminus: Large ribosomal subunit protein uL2 (274 aa).

The tract at residues 195–274 (VGNSDHGLES…SKYIIERRKK (80 aa)) is disordered. Basic residues-rich tracts occupy residues 209–220 (GRSRWQGRRPRN) and 244–264 (PRSR…KKQS).

This sequence belongs to the universal ribosomal protein uL2 family. In terms of assembly, part of the 50S ribosomal subunit. Forms a bridge to the 30S subunit in the 70S ribosome.

Its function is as follows. One of the primary rRNA binding proteins. Required for association of the 30S and 50S subunits to form the 70S ribosome, for tRNA binding and peptide bond formation. It has been suggested to have peptidyltransferase activity; this is somewhat controversial. Makes several contacts with the 16S rRNA in the 70S ribosome. The protein is Large ribosomal subunit protein uL2 of Bacteroides fragilis (strain ATCC 25285 / DSM 2151 / CCUG 4856 / JCM 11019 / LMG 10263 / NCTC 9343 / Onslow / VPI 2553 / EN-2).